We begin with the raw amino-acid sequence, 164 residues long: Peptide deformylase-like (164 aa).

Residue E134 is part of the active site.

This sequence belongs to the polypeptide deformylase family.

In Brucella melitensis biotype 1 (strain ATCC 23456 / CCUG 17765 / NCTC 10094 / 16M), this protein is Peptide deformylase-like.